The sequence spans 65 residues: Large ribosomal subunit protein bL33m (65 aa).

Residues 1 to 8 (MFLSAVFF) constitute a mitochondrion transit peptide.

It belongs to the bacterial ribosomal protein bL33 family. As to quaternary structure, component of the mitochondrial large ribosomal subunit (mt-LSU). Mature mammalian 55S mitochondrial ribosomes consist of a small (28S) and a large (39S) subunit. The 28S small subunit contains a 12S ribosomal RNA (12S mt-rRNA) and 30 different proteins. The 39S large subunit contains a 16S rRNA (16S mt-rRNA), a copy of mitochondrial valine transfer RNA (mt-tRNA(Val)), which plays an integral structural role, and 52 different proteins.

The protein localises to the mitochondrion. The polypeptide is Large ribosomal subunit protein bL33m (MRPL33) (Homo sapiens (Human)).